Here is a 147-residue protein sequence, read N- to C-terminus: Hemoglobin subunit epsilon (147 aa).

In terms of domain architecture, Globin spans 3 to 147 (HFTAEEKAAV…VAIALAHKYH (145 aa)). A phosphoserine mark is found at Ser14 and Ser51. 2 residues coordinate heme b: His64 and His93.

It belongs to the globin family. In terms of assembly, heterotetramer of two alpha chains and two epsilon chains in early embryonic hemoglobin Gower-2; two zeta chains and two epsilon chains in early embryonic hemoglobin Gower-1. Red blood cells.

In terms of biological role, the epsilon chain is a beta-type chain of early mammalian embryonic hemoglobin. The protein is Hemoglobin subunit epsilon (HBE1) of Pongo pygmaeus (Bornean orangutan).